We begin with the raw amino-acid sequence, 278 residues long: 4-deoxy-L-threo-5-hexosulose-uronate ketol-isomerase (278 aa).

Residues His196, His198, Glu203, and His245 each contribute to the Zn(2+) site.

This sequence belongs to the KduI family. The cofactor is Zn(2+).

The catalysed reaction is 5-dehydro-4-deoxy-D-glucuronate = 3-deoxy-D-glycero-2,5-hexodiulosonate. Its pathway is glycan metabolism; pectin degradation; 2-dehydro-3-deoxy-D-gluconate from pectin: step 4/5. Catalyzes the isomerization of 5-dehydro-4-deoxy-D-glucuronate to 3-deoxy-D-glycero-2,5-hexodiulosonate. This chain is 4-deoxy-L-threo-5-hexosulose-uronate ketol-isomerase, found in Yersinia pestis bv. Antiqua (strain Antiqua).